The following is a 370-amino-acid chain: Protein TEEBE (370 aa).

The signal sequence occupies residues 1-21; that stretch reads MSLYHSLSIFLLLSLCHGSYS. N-linked (GlcNAc...) asparagine glycosylation occurs at Asn215.

In terms of tissue distribution, expressed in primary and lateral roots, stigmatic papillae and hypocotyls.

Its subcellular location is the secreted. The protein localises to the cell wall. In terms of biological role, prevents hypocotyl epidermal cells elongation by modulating the pectin status in cell walls. Likely regulates pectin methylesterification degree during cell separation and elongation, including upon root-knot nematode Meloidogyne incognita infection. This Arabidopsis thaliana (Mouse-ear cress) protein is Protein TEEBE.